A 341-amino-acid chain; its full sequence is Serpentine receptor class epsilon-8 (341 aa).

The next 7 helical transmembrane spans lie at 37 to 57, 64 to 86, 101 to 123, 143 to 163, 169 to 189, 235 to 255, and 264 to 284; these read VGFLVFSWIEFLYLFYLFIFI, LTFLFMNYGGQYFCSMLSRCIIV, WILVANFARTVCLFIAMYILPIF, IWVSLMILSIFHPLVFASAIA, IPVVVHVISFFIVNIIGYIGI, VQISILFFNIGCCSILLMDHF, and WSYVCFNFFALVYGITVPIIL.

This sequence belongs to the nematode receptor-like protein sre family.

Its subcellular location is the membrane. This chain is Serpentine receptor class epsilon-8 (sre-8), found in Caenorhabditis elegans.